A 74-amino-acid polypeptide reads, in one-letter code: Kappa-scoloptoxin(07)-Ssm2e (74 aa).

Residues 1-19 (MLVFYALLFVSVFSNTVMG) form the signal peptide. Residues 20–41 (ATIDMPIPKPILREAIEEIDVN) constitute a propeptide that is removed on maturation.

This sequence belongs to the scoloptoxin-07 family. Post-translationally, contains 3 disulfide bonds. As to expression, expressed by the venom gland.

It is found in the secreted. Inhibits voltage-gated potassium channels. This Scolopendra mutilans (Chinese red-headed centipede) protein is Kappa-scoloptoxin(07)-Ssm2e.